Here is a 446-residue protein sequence, read N- to C-terminus: Cytochrome P450 monooxygenase ATR14 (446 aa).

The interval 403–446 (NFTYPDEFRPDRWLDDRDQKEYEHDHGDAMQPFSVGPRDCPSQK) is disordered. Residues 408–430 (DEFRPDRWLDDRDQKEYEHDHGD) are compositionally biased toward basic and acidic residues. Heme is bound at residue Cys-442.

This sequence belongs to the cytochrome P450 family. It depends on heme as a cofactor.

It participates in mycotoxin biosynthesis. Cytochrome P450 monooxygenase; part of the core atranone cluster (CAC) which products are predicted to catalyze most or all steps of mycotoxin atranone synthesis, starting from geranylgeranyl pyrophosphate (GGPP). The initial cyclization of GGPP to dolabellane is probably performed by the terpene cyclase ATR13. The Baeyer-Villiger oxidation near the end of the atranone synthesis, which converts atranones D and E to atranones F and G is predicted to be catalyzed by the monooxygenase ATR8. Of the CAC's other predicted gene products, the reducing PKS ATR6 might synthesize a polyketide chain. This polyketide is probably transferred onto the atranone backbone by the polyketide transferase ATR5. Other predicted CAC products include 4 oxygenases (ATR2, ATR3, ATR4, and ATR14), 3 short-chain reductases (ATR7, ATR9, and ATR10), and a methyltransferase (ATR12). These may all be involved in the various steps of atranone biosynthesis, although their specific roles must await experimental determination. This Stachybotrys chlorohalonatus (strain IBT 40285) protein is Cytochrome P450 monooxygenase ATR14.